The following is a 321-amino-acid chain: MEPLAMTLYPLESTQPTRNKTPNETTWSSEHTDDHTYFLVSLVICSLGLAGNGLLIWFLIFCIKRKPFTIYILHLAIADFMVLLCSSIMKLVNTFHIYNMTLESYAILFMIFGYNTGLHLLTAISVERCLSVLYPIWYQCQRPKHQSAVACMLLWALSVLVSGLENFFCILEVKPQFPECRYVYIFSCILTFLVFVPLMIFSNLILFIQVCCNLKPRQPTKLYVIIMTTVILFLVFAMPMKVLLIIGYYSSSLDDSVWDSLPYLNMLSTINCSINPIVYFVVGSLRRKRSRKSLKEALQKVFEEKPVVASRENVTQFSLPS.

Residues 1-35 are Extracellular-facing; sequence MEPLAMTLYPLESTQPTRNKTPNETTWSSEHTDDH. A glycan (N-linked (GlcNAc...) asparagine) is linked at Asn-23. Residues 36–56 traverse the membrane as a helical segment; the sequence is TYFLVSLVICSLGLAGNGLLI. At 57–71 the chain is on the cytoplasmic side; the sequence is WFLIFCIKRKPFTIY. The chain crosses the membrane as a helical span at residues 72–92; the sequence is ILHLAIADFMVLLCSSIMKLV. Residues 93–102 lie on the Extracellular side of the membrane; sequence NTFHIYNMTL. Asn-99 is a glycosylation site (N-linked (GlcNAc...) asparagine). A helical membrane pass occupies residues 103–126; it reads ESYAILFMIFGYNTGLHLLTAISV. The Cytoplasmic segment spans residues 127–147; that stretch reads ERCLSVLYPIWYQCQRPKHQS. The chain crosses the membrane as a helical span at residues 148-168; sequence AVACMLLWALSVLVSGLENFF. The Extracellular portion of the chain corresponds to 169-188; sequence CILEVKPQFPECRYVYIFSC. A helical membrane pass occupies residues 189–209; sequence ILTFLVFVPLMIFSNLILFIQ. Topologically, residues 210 to 225 are cytoplasmic; that stretch reads VCCNLKPRQPTKLYVI. Residues 226–246 form a helical membrane-spanning segment; it reads IMTTVILFLVFAMPMKVLLII. Position 247 (Gly-247) is a topological domain, extracellular. Residues 248–271 traverse the membrane as a helical segment; sequence YYSSSLDDSVWDSLPYLNMLSTIN. The Cytoplasmic segment spans residues 272–320; sequence CSINPIVYFVVGSLRRKRSRKSLKEALQKVFEEKPVVASRENVTQFSLP.

Belongs to the G-protein coupled receptor 1 family. Mas subfamily.

It localises to the cell membrane. Functionally, orphan receptor. May regulate nociceptor function and/or development, including the sensation or modulation of pain. The sequence is that of Mas-related G-protein coupled receptor member H (Mrgprh) from Mus musculus (Mouse).